The following is a 253-amino-acid chain: Uracil-DNA glycosylase (253 aa).

Asp79 (proton acceptor) is an active-site residue.

This sequence belongs to the uracil-DNA glycosylase (UDG) superfamily. UNG family.

It localises to the cytoplasm. It carries out the reaction Hydrolyzes single-stranded DNA or mismatched double-stranded DNA and polynucleotides, releasing free uracil.. Its function is as follows. Excises uracil residues from the DNA which can arise as a result of misincorporation of dUMP residues by DNA polymerase or due to deamination of cytosine. This chain is Uracil-DNA glycosylase, found in Xylella fastidiosa (strain 9a5c).